Consider the following 1012-residue polypeptide: MTNLQDQTQQIVPFIRSLLMPTTGPASIPDDTLEKHTLRSETSTYNLTVGDTGSGLIVFFPGFPGSIVGAHYTLQSNGNYKFDQMLLTAQNLPASYNYCRLVSRSLTVRSSTLPGGVYALNGTINAVTFQGSLSELTDVSYNGLMSATANINDKIGNVLVGEGVTVLSLPTSYDLGYVRLGDPIPAIGLDPKMVATCDSSDRPRVYTITAADDYQFSSQYQPGGVTITLFSANIDAITSLSVGGELVFQTSVHGLVLGATIYLIGFDGTAVITRAVAANNGLTTGTDNLLPFNLVIPTNEITQPITSIKLEIVTSKSGGQAGDQMSWSARGSLAVTIHGGNYPGALRPVTLVAYERVATGSVVTVAGVSNFELIPNPELAKNLVTEYGRFDPGAMNYTKLILSERDRLGIKTVWPTREYTDFREYFMEVADLNSPLKIAGAFGFKDIIRAIRRIAVPVVSTLFPPAAPLAHAIGEGVDYLLGDEAQAASGTARAASGKARAASGRIRQLTLAADKGYEVVANLFQVPQNPVVDGILASPGVLRGAHNLDCVLREGATLFPVVITTVEDAMTPKALNSKMFAVIEGVREDLQPPSQRGSFIRTLSGHRVYGYAPDGVLPLETGRDYTVVPIDDVWDDSIMLSKDPIPPIVGNSGNLAIAYMDVFRPKVPIHVAMTGALNACGEIEKVSFRSTKLATAHRLGLKLAGPGAFDVNTGPNWATFIKRFPHNPRDWDRLPYLNLPYLPPNAGRQYHLAMAASEFKETPELESAVRAMEAAANVDPLFQSALSVFMWLEENGIVTDMANFALSDPNAHRMRNFLANAPQAGSKSQRAKYGTAGYGVEARGPTPEEAQREKDTRISKKMETMGIYFATPEWVALNGHRGPSPGQLKYWQNTREIPDPNEDYLDYVHAEKSRLASEEQILRAATSIYGAPGQAEPPQAFIDEVAKVYEINHGRGPNQEQMKDLLLTAMEMKHRNPRRALPKPKPKPNAPTQRPPGRLGRWIRTVSDEDLE.

Residue aspartate 30 coordinates a divalent metal cation. In terms of domain architecture, Peptidase S50 spans 513–755 (ADKGYEVVAN…AGRQYHLAMA (243 aa)). The active-site Nucleophile is serine 652. The active site involves lysine 692. The interval 969–1012 (AMEMKHRNPRRALPKPKPKPNAPTQRPPGRLGRWIRTVSDEDLE) is disordered. Residues 975–986 (RNPRRALPKPKP) are compositionally biased toward basic residues. The segment at 1003–1012 (IRTVSDEDLE) is interaction with VP1 protein.

In terms of assembly, homotrimer. A central divalent metal stabilizes the VP2 trimer. Interacts with host ITGA4/ITGB1. As to quaternary structure, homodimer. Interacts (via C-terminus) with VP1 in the cytoplasm. Interacts with VP2. Specific enzymatic cleavages yield mature proteins. The capsid assembly seems to be regulated by polyprotein processing. The protease VP4 cleaves itself off the polyprotein, thus releasing pre-VP2 and VP3 within the infected cell. During capsid assembly, the C-terminus of pre-VP2 is further processed by VP4, giving rise to VP2, the external capsid protein and three small peptides that all stay closely associated with the capsid.

Its subcellular location is the virion. It is found in the host cytoplasm. Functionally, capsid protein VP2 self assembles to form an icosahedral capsid with a T=13 symmetry, about 70 nm in diameter, and consisting of 260 VP2 trimers. The capsid encapsulates the genomic dsRNA. VP2 is also involved in attachment and entry into the host cell by interacting with host ITGA4/ITGB1. Its function is as follows. The precursor of VP2 plays an important role in capsid assembly. First, pre-VP2 and VP2 oligomers assemble to form a procapsid. Then, the pre-VP2 intermediates may be processed into VP2 proteins by proteolytic cleavage mediated by VP4 to obtain the mature virion. The final capsid is composed of pentamers and hexamers but VP2 has a natural tendency to assemble into all-pentameric structures. Therefore pre-VP2 may be required to allow formation of the hexameric structures. Protease VP4 is a serine protease that cleaves the polyprotein into its final products. Pre-VP2 is first partially cleaved, and may be completely processed by VP4 upon capsid maturation. In terms of biological role, capsid protein VP3 plays a key role in virion assembly by providing a scaffold for the capsid made of VP2. May self-assemble to form a T=4-like icosahedral inner-capsid composed of at least 180 trimers. Plays a role in genomic RNA packaging by recruiting VP1 into the capsid and interacting with the dsRNA genome segments to form a ribonucleoprotein complex. Additionally, the interaction of the VP3 C-terminal tail with VP1 removes the inherent structural blockade of the polymerase active site. Thus, VP3 can also function as a transcriptional activator. Functionally, structural peptide 1 is a small peptide derived from pre-VP2 C-terminus. It destabilizes and perforates cell membranes, suggesting a role during entry. Its function is as follows. Structural peptide 2 is a small peptide derived from pre-VP2 C-terminus. It is not essential for the virus viability, but viral growth is affected when missing. Structural peptide 3 is a small peptide derived from pre-VP2 C-terminus. It is not essential for the virus viability, but viral growth is affected when missing. In terms of biological role, structural peptide 4 is a small peptide derived from pVP2 C-terminus. It is essential for the virus viability. This chain is Structural polyprotein, found in Gallus gallus (Chicken).